The following is a 447-amino-acid chain: Glycogen synthase (447 aa).

Arg-15 contacts ADP-alpha-D-glucose.

This sequence belongs to the glycosyltransferase 1 family. Bacterial/plant glycogen synthase subfamily.

The enzyme catalyses [(1-&gt;4)-alpha-D-glucosyl](n) + ADP-alpha-D-glucose = [(1-&gt;4)-alpha-D-glucosyl](n+1) + ADP + H(+). It participates in glycan biosynthesis; glycogen biosynthesis. In terms of biological role, synthesizes alpha-1,4-glucan chains using ADP-glucose. The polypeptide is Glycogen synthase (Deinococcus geothermalis (strain DSM 11300 / CIP 105573 / AG-3a)).